A 293-amino-acid chain; its full sequence is tRNA pseudouridine synthase A (293 aa).

Asp-60 serves as the catalytic Nucleophile. Residue Tyr-118 participates in substrate binding.

The protein belongs to the tRNA pseudouridine synthase TruA family. As to quaternary structure, homodimer.

It carries out the reaction uridine(38/39/40) in tRNA = pseudouridine(38/39/40) in tRNA. In terms of biological role, formation of pseudouridine at positions 38, 39 and 40 in the anticodon stem and loop of transfer RNAs. In Rippkaea orientalis (strain PCC 8801 / RF-1) (Cyanothece sp. (strain PCC 8801)), this protein is tRNA pseudouridine synthase A.